We begin with the raw amino-acid sequence, 222 residues long: N-(5'-phosphoribosyl)anthranilate isomerase (222 aa).

It belongs to the TrpF family.

The enzyme catalyses N-(5-phospho-beta-D-ribosyl)anthranilate = 1-(2-carboxyphenylamino)-1-deoxy-D-ribulose 5-phosphate. Its pathway is amino-acid biosynthesis; L-tryptophan biosynthesis; L-tryptophan from chorismate: step 3/5. This is N-(5'-phosphoribosyl)anthranilate isomerase from Brevibacillus brevis (strain 47 / JCM 6285 / NBRC 100599).